Consider the following 792-residue polypeptide: Cis-abienol synthase, chloroplastic (792 aa).

Residues 1-37 constitute a chloroplast transit peptide; the sequence is MVLGLRSKIIPLPDHKLGNIKLGSVTNAICHRPCRVR. The Mg(2+) site is built by aspartate 539, aspartate 543, asparagine 684, and glutamate 692. Positions 539-543 match the DDXXD motif motif; sequence DDFFD.

This sequence belongs to the terpene synthase family. It depends on Mg(2+) as a cofactor. In terms of tissue distribution, expressed specifically in trichomes.

Its subcellular location is the plastid. The protein resides in the chloroplast. The catalysed reaction is 8-hydroxycopalyl diphosphate = cis-abienol + diphosphate. Its pathway is secondary metabolite biosynthesis; terpenoid biosynthesis. Functionally, involved in the biosynthesis of cis-abienol, a labdane diterpene that can be used as synthesis precursor of ambergris substitution fragance products. In Nicotiana tabacum (Common tobacco), this protein is Cis-abienol synthase, chloroplastic.